The primary structure comprises 110 residues: Large ribosomal subunit protein uL22 (110 aa).

This sequence belongs to the universal ribosomal protein uL22 family. As to quaternary structure, part of the 50S ribosomal subunit.

Functionally, this protein binds specifically to 23S rRNA; its binding is stimulated by other ribosomal proteins, e.g. L4, L17, and L20. It is important during the early stages of 50S assembly. It makes multiple contacts with different domains of the 23S rRNA in the assembled 50S subunit and ribosome. The globular domain of the protein is located near the polypeptide exit tunnel on the outside of the subunit, while an extended beta-hairpin is found that lines the wall of the exit tunnel in the center of the 70S ribosome. This is Large ribosomal subunit protein uL22 from Vibrio parahaemolyticus serotype O3:K6 (strain RIMD 2210633).